Here is a 496-residue protein sequence, read N- to C-terminus: Probable cytosol aminopeptidase (496 aa).

Residues K258 and D263 each coordinate Mn(2+). K270 is an active-site residue. Residues D281, D340, and E342 each coordinate Mn(2+). Residue R344 is part of the active site.

Belongs to the peptidase M17 family. Mn(2+) is required as a cofactor.

The protein localises to the cytoplasm. It catalyses the reaction Release of an N-terminal amino acid, Xaa-|-Yaa-, in which Xaa is preferably Leu, but may be other amino acids including Pro although not Arg or Lys, and Yaa may be Pro. Amino acid amides and methyl esters are also readily hydrolyzed, but rates on arylamides are exceedingly low.. The enzyme catalyses Release of an N-terminal amino acid, preferentially leucine, but not glutamic or aspartic acids.. Presumably involved in the processing and regular turnover of intracellular proteins. Catalyzes the removal of unsubstituted N-terminal amino acids from various peptides. The polypeptide is Probable cytosol aminopeptidase (Helicobacter pylori (strain G27)).